Consider the following 62-residue polypeptide: uncharacterized protein (62 aa).

Residues 15 to 37 form a helical membrane-spanning segment; sequence FSSGVLISNFLLFNFIIISHSSL. A compositionally biased stretch (low complexity) spans 41–56; sequence TTTTTTTTTTTTNTKS. A disordered region spans residues 41 to 62; that stretch reads TTTTTTTTTTTTNTKSTLHRSG.

It localises to the membrane. This is an uncharacterized protein from Dictyostelium discoideum (Social amoeba).